The chain runs to 346 residues: N-acetyl-gamma-glutamyl-phosphate reductase (346 aa).

Residue Cys150 is part of the active site.

Belongs to the NAGSA dehydrogenase family. Type 1 subfamily.

Its subcellular location is the cytoplasm. It carries out the reaction N-acetyl-L-glutamate 5-semialdehyde + phosphate + NADP(+) = N-acetyl-L-glutamyl 5-phosphate + NADPH + H(+). It participates in amino-acid biosynthesis; L-arginine biosynthesis; N(2)-acetyl-L-ornithine from L-glutamate: step 3/4. Its function is as follows. Catalyzes the NADPH-dependent reduction of N-acetyl-5-glutamyl phosphate to yield N-acetyl-L-glutamate 5-semialdehyde. This is N-acetyl-gamma-glutamyl-phosphate reductase from Desulforudis audaxviator (strain MP104C).